Here is a 340-residue protein sequence, read N- to C-terminus: C5a anaphylatoxin chemotactic receptor 1 (340 aa).

Topologically, residues threonine 1–aspartate 30 are extracellular. The required for CHIPS binding stretch occupies residues aspartate 3 to aspartate 11. 2 positions are modified to sulfotyrosine: tyrosine 4 and tyrosine 7. The tract at residues aspartate 14–serine 23 is involved in C5a binding. The helical transmembrane segment at isoleucine 31–phenylalanine 57 threads the bilayer. The Cytoplasmic segment spans residues glutamate 58 to threonine 62. The chain crosses the membrane as a helical span at residues isoleucine 63–phenylalanine 86. Topologically, residues threonine 87–arginine 103 are extracellular. Cysteine 102 and cysteine 181 are joined by a disulfide. Residues isoleucine 104–alanine 125 traverse the membrane as a helical segment. Over aspartate 126–alanine 146 the chain is Cytoplasmic. The helical transmembrane segment at tryptophan 147–tyrosine 167 threads the bilayer. Topologically, residues arginine 168 to arginine 193 are extracellular. The chain crosses the membrane as a helical span at residues alanine 194–leucine 219. The Cytoplasmic segment spans residues leucine 220–lysine 235. Residues valine 236–methionine 258 traverse the membrane as a helical segment. Residues serine 259–aspartate 275 are Extracellular-facing. A helical transmembrane segment spans residues serine 276–alanine 296. The Cytoplasmic segment spans residues glycine 297–threonine 340. Phosphoserine occurs at positions 307, 310, 320, 325, 327, and 331.

The protein belongs to the G-protein coupled receptor 1 family. As to quaternary structure, homodimer. May also form higher-order oligomers. Interacts (when phosphorylated) with ARRB1 and ARRB2; the interaction is associated with internalization of C5aR. Interacts (via N-terminal domain) with S.aureus chemotaxis inhibitory protein (CHIPS); the interaction blocks the receptor and may thus inhibit the immune response. Sulfation plays a critical role in the association of C5aR with C5a, but no significant role in the ability of the receptor to transduce a signal and mobilize calcium in response to a small peptide agonist. Sulfation at Tyr-7 is important for CHIPS binding. In terms of processing, phosphorylated on serine residues in response to C5a binding, resulting in internalization of the receptor and short-term desensitization to C5a.

It is found in the cell membrane. The protein localises to the cytoplasmic vesicle. Functionally, receptor for the chemotactic and inflammatory peptide anaphylatoxin C5a. The ligand interacts with at least two sites on the receptor: a high-affinity site on the extracellular N-terminus, and a second site in the transmembrane region which activates downstream signaling events. Receptor activation stimulates chemotaxis, granule enzyme release, intracellular calcium release and superoxide anion production. The chain is C5a anaphylatoxin chemotactic receptor 1 (C5AR1) from Macaca mulatta (Rhesus macaque).